A 92-amino-acid polypeptide reads, in one-letter code: Phospholemman (92 aa).

The first 20 residues, methionine 1–alanine 20, serve as a signal peptide directing secretion. Residues alanine 22–serine 35 lie on the Extracellular side of the membrane. A helical membrane pass occupies residues leucine 36–leucine 56. Topologically, residues lysine 57–arginine 92 are cytoplasmic. The interval alanine 67–arginine 92 is disordered. Position 79 is a phosphothreonine (threonine 79). At serine 82 the chain carries Phosphoserine. Serine 83 bears the Phosphoserine; by PKA and PKC mark. The span at serine 83 to arginine 92 shows a compositional bias: basic residues. Serine 88 is subject to Phosphoserine; by PKA. A Phosphothreonine; by PKC modification is found at threonine 89.

The protein belongs to the FXYD family. Homotetramer. Monomer. Regulatory subunit of the sodium/potassium-transporting ATPase (NKA) which is composed of a catalytic alpha subunit, a non-catalytic beta subunit and an additional regulatory subunit. The monomeric form associates with NKA while the oligomeric form does not. Interacts with the catalytic alpha-1 subunit ATP1A1. Also interacts with the catalytic alpha-2 and alpha-3 subunits ATP1A2 and ATP1A3. Very little interaction with ATP1A1, ATP1A2 or ATP1A3 when phosphorylated at Ser-83. Interacts with the non-catalytic beta-1 subunit ATP1B1. Oxidative stress decreases interaction with ATP1A1 but increases interaction with ATP1B1. Major plasma membrane substrate for cAMP-dependent protein kinase (PKA) and protein kinase C (PKC) in several different tissues. Phosphorylated in response to insulin and adrenergic stimulation. Phosphorylation at Ser-88 stimulates sodium/potassium-transporting ATPase activity while the unphosphorylated form inhibits sodium/potassium-transporting ATPase activity. Phosphorylation increases tetramerization, decreases binding to ATP1A1 and reduces inhibition of ATP1A1 activity. Phosphorylation at Ser-83 leads to greatly reduced interaction with ATP1A1, ATP1A2 and ATP1A3. May be phosphorylated by DMPK. Post-translationally, palmitoylation increases half-life and stability and is enhanced upon phosphorylation at Ser-88 by PKA. In terms of processing, glutathionylated. Expressed in ventricular myocytes (at protein level).

The protein resides in the cell membrane. Its subcellular location is the sarcolemma. It is found in the apical cell membrane. It localises to the membrane. The protein localises to the caveola. The protein resides in the T-tubule. Its function is as follows. Associates with and regulates the activity of the sodium/potassium-transporting ATPase (NKA) which transports Na(+) out of the cell and K(+) into the cell. Inhibits NKA activity in its unphosphorylated state and stimulates activity when phosphorylated. Reduces glutathionylation of the NKA beta-1 subunit ATP1B1, thus reversing glutathionylation-mediated inhibition of ATP1B1. Contributes to female sexual development by maintaining the excitability of neurons which secrete gonadotropin-releasing hormone. This Oryctolagus cuniculus (Rabbit) protein is Phospholemman.